A 439-amino-acid chain; its full sequence is Glucose-1-phosphate adenylyltransferase (439 aa).

Alpha-D-glucose 1-phosphate-binding positions include Y122, G187, 202 to 203, and S220; that span reads EK.

Belongs to the bacterial/plant glucose-1-phosphate adenylyltransferase family. In terms of assembly, homotetramer.

The catalysed reaction is alpha-D-glucose 1-phosphate + ATP + H(+) = ADP-alpha-D-glucose + diphosphate. Its pathway is glycan biosynthesis; glycogen biosynthesis. Its function is as follows. Involved in the biosynthesis of ADP-glucose, a building block required for the elongation reactions to produce glycogen. Catalyzes the reaction between ATP and alpha-D-glucose 1-phosphate (G1P) to produce pyrophosphate and ADP-Glc. This chain is Glucose-1-phosphate adenylyltransferase, found in Thiobacillus denitrificans (strain ATCC 25259 / T1).